The sequence spans 138 residues: MGAWLFILAVVVNCINLFGQVHFTILYADLEADYINPIELCSKVNKLITPEAALHGALSLLFLLNGYWFVFLLNLPVLAYNLNKIYNKVQLLDATEIFRTLGKHKRESFLKLGFHLLMFFFYLYRMIMALIAESGDDF.

At 2 to 6 the chain is on the cytoplasmic side; the sequence is GAWLF. Residues 7–27 traverse the membrane as a helical segment; it reads ILAVVVNCINLFGQVHFTILY. The Extracellular portion of the chain corresponds to 28–52; it reads ADLEADYINPIELCSKVNKLITPEA. The chain crosses the membrane as a helical span at residues 53 to 73; that stretch reads ALHGALSLLFLLNGYWFVFLL. Residues 74-111 lie on the Cytoplasmic side of the membrane; that stretch reads NLPVLAYNLNKIYNKVQLLDATEIFRTLGKHKRESFLK. Residues 112-132 traverse the membrane as a helical segment; the sequence is LGFHLLMFFFYLYRMIMALIA. Residues 133–138 are Extracellular-facing; sequence ESGDDF.

Belongs to the cornichon family.

It localises to the endoplasmic reticulum membrane. Its subcellular location is the golgi apparatus membrane. Its function is as follows. Could regulate export of the bud site and axial growth sites selection protein AXL2 and possibly other secretory proteins from the endoplasmic reticulum in COPII-coated vesicles. Seems to be required for axial budding pattern in haploid cells. The sequence is that of ER-derived vesicles protein ERV14 (ERV14) from Saccharomyces cerevisiae (strain ATCC 204508 / S288c) (Baker's yeast).